Reading from the N-terminus, the 312-residue chain is Olfactory receptor-like protein COR2 (312 aa).

Topologically, residues 1-26 (MASGNCTTPTTFILSGLTDNPRLQMP) are extracellular. N-linked (GlcNAc...) asparagine glycosylation is present at Asn-5. A helical transmembrane segment spans residues 27–49 (LFMVFLVIYTTTLLTNLGLIALI). The Cytoplasmic segment spans residues 50-57 (GMDLHLQT). A helical membrane pass occupies residues 58–79 (PMYIFLQNLSFTDAAYSTVITP). The Extracellular segment spans residues 80–100 (KMLATFLEERRTISYVGCILQ). A disulfide bond links Cys-97 and Cys-179. The helical transmembrane segment at 101-120 (YFSFVLLTTSEWLLLAVMAY) threads the bilayer. Residues 121-139 (DRYVAICKPLLYPSIMTKA) lie on the Cytoplasmic side of the membrane. The helical transmembrane segment at 140-164 (VCWRLVKGLYSLAFLNSLVHTSGLL) threads the bilayer. Over 165-205 (KLSFCSSNVVNHFFCDNRPLFQISSSSTTLNELLVIISGSL) the chain is Extracellular. Residues 206–226 (FVMSSIITILISYVFIILTVV) form a helical membrane-spanning segment. Over 227–239 (MIRSKDGKYKAFS) the chain is Cytoplasmic. Residues 240–260 (TCTSHLMAVSLFHGTVIFMYL) traverse the membrane as a helical segment. At 261 to 271 (RSVKLFSLDTD) the chain is on the extracellular side. The helical transmembrane segment at 272-292 (KIASLFYTVVIPMLNPLIYSW) threads the bilayer. Residues 293–312 (RNKEVKDALRRLTATSVWLH) are Cytoplasmic-facing.

It belongs to the G-protein coupled receptor 1 family.

It is found in the cell membrane. Functionally, odorant receptor. The sequence is that of Olfactory receptor-like protein COR2 (COR2) from Gallus gallus (Chicken).